The chain runs to 349 residues: PDZ and LIM domain protein 2 (349 aa).

The 84-residue stretch at Met-1–Gln-84 folds into the PDZ domain. Residues Ser-74–Leu-147 are disordered. Positions Asp-81–Glu-94 are enriched in polar residues. Phosphoserine is present on residues Ser-124, Ser-127, Ser-129, Ser-134, and Ser-137. Thr-138 and Thr-142 each carry phosphothreonine. Ser-143 and Ser-163 each carry phosphoserine. A disordered region spans residues Ala-169–Asp-212. A compositionally biased stretch (polar residues) spans Pro-178–Asp-190. A phosphoserine mark is found at Ser-199, Ser-204, Ser-205, Ser-209, Ser-210, and Ser-263. The span at Ser-199–Ser-210 shows a compositional bias: low complexity. The LIM zinc-binding domain maps to His-281–Met-341.

As to quaternary structure, interacts with alpha-actinins ACTN1 and ACTN4, FLNA and MYH9. Interacts (via LIM zinc-binding domain) with MKRN2. In terms of tissue distribution, highly expressed in lung. Expressed at intermediate level in kidney, testis and spleen. Weakly expressed in heart and brain.

It is found in the cytoplasm. It localises to the cytoskeleton. Its function is as follows. Probable adapter protein located at the actin cytoskeleton that promotes cell attachment. Necessary for the migratory capacity of epithelial cells. Overexpression enhances cell adhesion to collagen and fibronectin and suppresses anchorage independent growth. May contribute to tumor cell migratory capacity. The chain is PDZ and LIM domain protein 2 (Pdlim2) from Mus musculus (Mouse).